Reading from the N-terminus, the 150-residue chain is UPF0756 membrane protein Dd1591_2981 (150 aa).

The next 4 helical transmembrane spans lie at 10–32, 51–71, 88–108, and 127–147; these read ILLA…AILF, YGLS…IASG, LMAV…VVLM, and ALFR…SLLI.

It belongs to the UPF0756 family.

The protein resides in the cell membrane. The protein is UPF0756 membrane protein Dd1591_2981 of Dickeya chrysanthemi (strain Ech1591) (Dickeya zeae (strain Ech1591)).